A 768-amino-acid polypeptide reads, in one-letter code: MPAWPRFMSLRRQYLYKALDKNHQKHPIKHPHTRFLSRLFCALAVLFSYSIYQSFRTDLKQSGSWGCEMSWMSPSYRRLEWTEFISTRYALYLYREQGLDSEDTLSGHPVLFVPGNAGSYQQVRSIASSASKQYYEQVKARERNVVTGKKIDFFTADLKEEFSAFHARTVREQAVFIQHCIKGILQEYTHLPQEKRPTQVTLLAHSMGGVVARLAMDPITSISVDIIVTLSTPHILPPLALERDMDSIYSLIRWRRQHISTHPPLISICGGISDTQIVSDSCALPFFQAGNNSDIAVFTTGIPGVWTAVEHQAIIWCHQIRWRIARMLLDMSSRANTTAKLVTAKEWLLDYQEDETLKEPRSERQHDYSVSSRNMTFIGLHQPSKAFVAQQCNGLERCRTVPSVMSLLPFPNNPSDPFPLPGEGIKPSEVMLVAEISLSSTNTVVKINASQYGQTIAGSREHHLVKGNSWSEFTITMRYRYIRIQLLFCIRPTHTSTFSFYCGTLLTLPRQSWHLSGDISIALMSCTTGVAQKKLLQRTGQICDSVPYGRSCMASRVGCCGSSVSIIRFYQHRSVRTCKGFKLILVGEILSWNSALERIARRRMPICIVLLLLGATIQSQLPDFPMLHTFFLGVNQLEMVPLVGILGVWTFGLLCVVSFHLISTCAIFTTLLIPFKILHVAIWSRNIWTGSAALVSTDNNFYYAIPPALLVKCASCGGTIQKRHVCLKACRIALIILIMSSFSVGARWTWILSPIANAVLILFVASII.

The helical transmembrane segment at 35–55 (FLSRLFCALAVLFSYSIYQSF) threads the bilayer. Ser206 is a catalytic residue. 4 N-linked (GlcNAc...) asparagine glycosylation sites follow: Asn291, Asn336, Asn374, and Asn448. Transmembrane regions (helical) follow at residues 604-624 (MPIC…LPDF), 642-662 (LVGI…FHLI), 663-683 (STCA…VAIW), 700-720 (NFYY…GGTI), 725-745 (VCLK…FSVG), and 748-768 (WTWI…ASII).

It belongs to the GPI inositol-deacylase family.

The protein resides in the endoplasmic reticulum membrane. Involved in inositol deacylation of GPI-anchored proteins which plays important roles in the quality control and ER-associated degradation of GPI-anchored proteins. This Cryptococcus neoformans var. neoformans serotype D (strain B-3501A) (Filobasidiella neoformans) protein is GPI inositol-deacylase (BST1).